The chain runs to 264 residues: [LysW]-aminoadipate/[LysW]-glutamate kinase (264 aa).

Substrate is bound by residues Gly35–Gly36, Arg62, and Asn167.

This sequence belongs to the acetylglutamate kinase family. LysZ subfamily.

It localises to the cytoplasm. The catalysed reaction is [amino-group carrier protein]-C-terminal-N-(1,4-dicarboxybutan-1-yl)-L-glutamine + ATP = [amino-group carrier protein]-C-terminal-N-(1-carboxy-5-phosphooxy-5-oxopentan-1-yl)-L-glutamine + ADP. It catalyses the reaction [amino-group carrier protein]-C-terminal-gamma-(L-glutamyl)-L-glutamate + ATP = [amino-group carrier protein]-C-terminal-gamma-(5-phospho-L-glutamyl)-L-glutamate + ADP. Its pathway is amino-acid biosynthesis; L-lysine biosynthesis via AAA pathway; L-lysine from L-alpha-aminoadipate (Thermus route): step 2/5. It functions in the pathway amino-acid biosynthesis; L-arginine biosynthesis. Functionally, involved in both the arginine and lysine biosynthetic pathways. Phosphorylates the LysW-bound precursors glutamate (for arginine biosynthesis), respectively alpha-aminoadipate (for lysine biosynthesis). This Saccharolobus solfataricus (strain ATCC 35092 / DSM 1617 / JCM 11322 / P2) (Sulfolobus solfataricus) protein is [LysW]-aminoadipate/[LysW]-glutamate kinase.